A 592-amino-acid polypeptide reads, in one-letter code: Anaphase-promoting complex subunit 8 (592 aa).

TPR repeat units lie at residues 66–99 (EYYK…QLPI), 160–193 (QQQQ…NKKD), 291–324 (TYIL…EPNR), 359–392 (PETC…NDRY), 393–426 (LSAW…NPRD), 428–460 (RAWY…RPYD), 461–494 (PRMW…YDRE), and 496–528 (VAIN…CDQE). The tract at residues 129–166 (QQQAQQQAQQAQQESQQNDKNNDTNNNNKTDQQQQQQQ) is disordered.

The protein belongs to the APC8/CDC23 family. In terms of assembly, the APC/C is composed of at least 13 subunits that stay tightly associated throughout the cell cycle: anapc1, anapc2, anapc3, anapc4, anapc5, anapc6, anapc7, anapc8, anapc10, anapc11, cdc20, cdc26 and cdh1.

The protein localises to the nucleus. Its pathway is protein modification; protein ubiquitination. Functionally, component of the anaphase promoting complex/cyclosome (APC/C), a cell cycle-regulated E3 ubiquitin-protein ligase complex that controls progression through mitosis and the G1 phase of the cell cycle. This chain is Anaphase-promoting complex subunit 8 (anapc8), found in Dictyostelium discoideum (Social amoeba).